Consider the following 435-residue polypeptide: Tubulin-like protein TubZ (435 aa).

GTP-binding positions include 25 to 26 (MG), 124 to 126 (GTG), Asn-185, and Asn-209. Residues 403–435 (QEEKPKKKKLNFGAEPEAEVADDSQPTKKKLSF) form a disordered region.

It belongs to the FtsZ family. TubZ subfamily. As to quaternary structure, polymerizes to form two-stranded filaments and bundles at higher concentration in the presence of GTP. Binds to the TubR-tubC protein DNA complex.

Its subcellular location is the cytoplasm. The catalysed reaction is GTP + H2O = GDP + phosphate + H(+). With respect to regulation, GTPase inhibited by GTP-gamma-S, which also stabilizes filaments. A tubulin-like, filament forming GTPase; the motor component of the type III plasmid partition system which ensures correct segregation of the pXO1 plasmid. Essential for plasmid replication. The filaments seed from a DNA centromere-like site (tubC)-TubR complex which extends to surround the TubZ filaments. Highly dynamic filaments grow at the plus end and depolymerize at the minus end, a process called treadmilling. TubR-tubC complexes track the depolymerizing minus end of the filament, probably pulling plasmid within the cell. Has a high GTPase activity; in the presence of GTP assembles into dynamic filaments which bind almost exclusively GDP. Filament formation is cooperative, requiring a critical concentration. Formation occurs very quickly and is followed by disassembly as GTP is consumed. Small amounts of GTP-gamma-S stabilize filaments. Has high GTP and dGTPase activity, 6-fold lower ATPase activity. Forms filaments in the presence of ATP that also disassemble. Weakly binds DNA in a GTP-dependent, non-sequence-specific manner; GTP hydrolysis is not required for DNA-binding. The chain is Tubulin-like protein TubZ from Bacillus anthracis.